Here is a 583-residue protein sequence, read N- to C-terminus: MRTHFCGELNKDNIGQTVEIYGWVNRRRDHGGVIFLDMRDKHGIAQVVINPDNADFSLAETVRNEFVLKITGTIIARGEGLTNPKLSTGKIEIKAQNIEILNTSKPVPFQIDATDTSEEVRLRYRYLDLRSDTMQNRLRLRSRVTRYMREFMDEHDFLDIETPFLTKATPEGARDYLVPSRTHSGKFFALPQSPQLFKQLLMMSGFERYYQIVKCFRDEDLRADRQPEFTQLDVETSFMSENEIMTMMEKMTRGLFKLVINVDLGDNFPTITYADSMAKYGLDRPDMRISMQIVSIDKIMQGVDFKVFSGPANYDDSRVAALKVPNGASISRKNIDKYTKYVSIYGAKGLAYIKLNKNGPASPILKFLGDEVIAKVIEMTDAKTGDIIFFGADKSKIVNEALGNLREQLAKDLDLFDTQWAPIWVVDFPMFEVGDDGSLNTTHHPFTAPSVDAKTLEKTATTALSKAYDLVINGSEVGGGSIRIHQIDMQKTVLKLLGISDQEIQDKFGFFLNALEYGCPPHGGMAFGLDRLMMIMTGANSIRDVVAFPKTQTAACLLTDTPTSISRKLLRELSVKINLPEKD.

E171 is a binding site for L-aspartate. The interval 195–198 is aspartate; that stretch reads QLFK. Residue R217 participates in L-aspartate binding. ATP contacts are provided by residues 217–219 and Q226; that span reads RDE. L-aspartate is bound at residue H443. E476 is a binding site for ATP. Position 483 (R483) interacts with L-aspartate. 528-531 lines the ATP pocket; it reads GLDR.

It belongs to the class-II aminoacyl-tRNA synthetase family. Type 1 subfamily. In terms of assembly, homodimer.

It localises to the cytoplasm. It catalyses the reaction tRNA(Asx) + L-aspartate + ATP = L-aspartyl-tRNA(Asx) + AMP + diphosphate. Functionally, aspartyl-tRNA synthetase with relaxed tRNA specificity since it is able to aspartylate not only its cognate tRNA(Asp) but also tRNA(Asn). Reaction proceeds in two steps: L-aspartate is first activated by ATP to form Asp-AMP and then transferred to the acceptor end of tRNA(Asp/Asn). This chain is Aspartate--tRNA(Asp/Asn) ligase, found in Ruthia magnifica subsp. Calyptogena magnifica.